The primary structure comprises 59 residues: Probable stress-associated endoplasmic reticulum protein (59 aa).

The interval 1 to 30 is disordered; the sequence is MSQSRTLRQKSQKYQENIEKRGVASPKKKE. Over 1–34 the chain is Cytoplasmic; that stretch reads MSQSRTLRQKSQKYQENIEKRGVASPKKKEDGLN. Residues 16–30 are compositionally biased toward basic and acidic residues; that stretch reads ENIEKRGVASPKKKE. The chain crosses the membrane as a helical; Anchor for type IV membrane protein span at residues 35-55; the sequence is INPYVLGFIIFVVVGSTLLQI. The Extracellular segment spans residues 56 to 59; the sequence is LKGQ.

This sequence belongs to the RAMP4 family.

The protein resides in the membrane. Its subcellular location is the endoplasmic reticulum membrane. Functionally, may interact with target proteins during translocation into the lumen of the endoplasmic reticulum. May protect unfolded target proteins against degradation and facilitate correct glycosylation. The polypeptide is Probable stress-associated endoplasmic reticulum protein (serp) (Dictyostelium discoideum (Social amoeba)).